Here is a 248-residue protein sequence, read N- to C-terminus: MKTLILLIQFFTRIPIPIAINMDEVNLKKGSALLPFVGLIIGAWNWLVFTLVALVMPLPVAIIAGLFAEIIITGGFHVDALADTADGLFSSRKKERMLEIMKDSRVGANGVIAICFYFLFYGALFLSVPSAYEIGWLFFVLPIVAKGVTMLLFAKMTYAGSNEGLGSIFLGVPWWPIAISQLFVLFILGLVFSYIGLLAYAGVILFTIIYRTFVYKRIGGMNGDTLGAGGQMGQLVCLFCLVLVWGLI.

The next 8 helical transmembrane spans lie at 24 to 44, 47 to 67, 70 to 90, 106 to 126, 134 to 154, 165 to 185, 186 to 206, and 228 to 248; these read EVNL…IGAW, LVFT…AGLF, IIIT…GLFS, VGAN…ALFL, IGWL…LLFA, LGSI…LFVL, FILG…VILF, and AGGQ…WGLI.

The protein belongs to the CobS family. Mg(2+) is required as a cofactor.

Its subcellular location is the cell membrane. The enzyme catalyses alpha-ribazole + adenosylcob(III)inamide-GDP = adenosylcob(III)alamin + GMP + H(+). The catalysed reaction is alpha-ribazole 5'-phosphate + adenosylcob(III)inamide-GDP = adenosylcob(III)alamin 5'-phosphate + GMP + H(+). Its pathway is cofactor biosynthesis; adenosylcobalamin biosynthesis; adenosylcobalamin from cob(II)yrinate a,c-diamide: step 7/7. In terms of biological role, joins adenosylcobinamide-GDP and alpha-ribazole to generate adenosylcobalamin (Ado-cobalamin). Also synthesizes adenosylcobalamin 5'-phosphate from adenosylcobinamide-GDP and alpha-ribazole 5'-phosphate. This chain is Adenosylcobinamide-GDP ribazoletransferase, found in Listeria welshimeri serovar 6b (strain ATCC 35897 / DSM 20650 / CCUG 15529 / CIP 8149 / NCTC 11857 / SLCC 5334 / V8).